A 424-amino-acid chain; its full sequence is D-inositol 3-phosphate glycosyltransferase (424 aa).

Residue histidine 20 participates in 1D-myo-inositol 3-phosphate binding. UDP-N-acetyl-alpha-D-glucosamine is bound by residues 26-27 (QP) and glycine 34. Residues 31-36 (DAGGMN), lysine 89, tyrosine 122, threonine 146, and arginine 166 contribute to the 1D-myo-inositol 3-phosphate site. UDP-N-acetyl-alpha-D-glucosamine-binding residues include arginine 240, lysine 245, and methionine 306. Mg(2+)-binding residues include tyrosine 315, arginine 316, and alanine 318. The UDP-N-acetyl-alpha-D-glucosamine site is built by glutamate 328 and glutamate 336. Position 342 (threonine 342) interacts with Mg(2+).

The protein belongs to the glycosyltransferase group 1 family. MshA subfamily. As to quaternary structure, homodimer.

The enzyme catalyses 1D-myo-inositol 3-phosphate + UDP-N-acetyl-alpha-D-glucosamine = 1D-myo-inositol 2-acetamido-2-deoxy-alpha-D-glucopyranoside 3-phosphate + UDP + H(+). Catalyzes the transfer of a N-acetyl-glucosamine moiety to 1D-myo-inositol 3-phosphate to produce 1D-myo-inositol 2-acetamido-2-deoxy-glucopyranoside 3-phosphate in the mycothiol biosynthesis pathway. The chain is D-inositol 3-phosphate glycosyltransferase from Kribbella flavida (strain DSM 17836 / JCM 10339 / NBRC 14399).